A 177-amino-acid chain; its full sequence is Large ribosomal subunit protein uL6 (177 aa).

It belongs to the universal ribosomal protein uL6 family. In terms of assembly, part of the 50S ribosomal subunit.

This protein binds to the 23S rRNA, and is important in its secondary structure. It is located near the subunit interface in the base of the L7/L12 stalk, and near the tRNA binding site of the peptidyltransferase center. The sequence is that of Large ribosomal subunit protein uL6 from Ralstonia pickettii (strain 12J).